A 157-amino-acid polypeptide reads, in one-letter code: SsrA-binding protein (157 aa).

The protein belongs to the SmpB family.

The protein resides in the cytoplasm. Required for rescue of stalled ribosomes mediated by trans-translation. Binds to transfer-messenger RNA (tmRNA), required for stable association of tmRNA with ribosomes. tmRNA and SmpB together mimic tRNA shape, replacing the anticodon stem-loop with SmpB. tmRNA is encoded by the ssrA gene; the 2 termini fold to resemble tRNA(Ala) and it encodes a 'tag peptide', a short internal open reading frame. During trans-translation Ala-aminoacylated tmRNA acts like a tRNA, entering the A-site of stalled ribosomes, displacing the stalled mRNA. The ribosome then switches to translate the ORF on the tmRNA; the nascent peptide is terminated with the 'tag peptide' encoded by the tmRNA and targeted for degradation. The ribosome is freed to recommence translation, which seems to be the essential function of trans-translation. This Rhodococcus jostii (strain RHA1) protein is SsrA-binding protein.